The sequence spans 611 residues: ANK repeat-containing protein nipk-1 (611 aa).

The stretch at 91-149 (NSKSKKKTENQETKEKDEEAEEKKDGPPKDDKELKMKKEKEQEDENAELDEQKKDGDLL) forms a coiled coil. Disordered regions lie at residues 92–167 (SKSK…SHPY), 212–255 (ISAS…DTSR), and 280–333 (TKEE…LSPR). A compositionally biased stretch (basic and acidic residues) spans 97–131 (KTENQETKEKDEEAEEKKDGPPKDDKELKMKKEKE). Polar residues-rich tracts occupy residues 212-223 (ISASTTPDTVLS), 239-255 (ESLQ…DTSR), and 315-333 (GTCS…LSPR). ANK repeat units follow at residues 375–405 (DGDT…TMNE), 417–446 (FGET…SPNS), 452–482 (VGDS…RVNE), 486–527 (DGQT…DPTI), and 532–561 (TGKT…EDTF).

The protein belongs to the iASPP family. As to expression, expressed in the nervous system.

Functionally, acts downstream of the receptor complex composed of ilcr-1 and ilcr-2, which is a signaling complex that modulates neuronal activity and animal behavior in response to sensory neuron input. Mediates signaling of the complex. This chain is ANK repeat-containing protein nipk-1, found in Caenorhabditis elegans.